The following is a 21-amino-acid chain: Peptidyl-prolyl cis-trans isomerase (21 aa).

Positions 1 to 21 (ENFKIKHTEPGLLSMANAGKN) are disordered.

It belongs to the cyclophilin-type PPIase family. PPIase A subfamily.

The enzyme catalyses [protein]-peptidylproline (omega=180) = [protein]-peptidylproline (omega=0). Functionally, PPIases accelerate the folding of proteins. It catalyzes the cis-trans isomerization of proline imidic peptide bonds in oligopeptides. This is Peptidyl-prolyl cis-trans isomerase from Naegleria fowleri (Brain eating amoeba).